Consider the following 80-residue polypeptide: Protein UL148A (80 aa).

The chain crosses the membrane as a helical span at residues 10-30 (WIPVCVVVVMTSVVLFAGLHV).

Its subcellular location is the host membrane. Functionally, plays a role in the down-regulation of the host NKG2D ligand MICA by utilizing the lysosomal pathway for its degradation. In turn, MICA reduction diminishes NK-cell killing of HCMV-infected cells. The chain is Protein UL148A (UL148A) from Human cytomegalovirus (strain Merlin) (HHV-5).